The chain runs to 323 residues: Aldo-keto reductase family 1 member C18 (323 aa).

Residues 20-24 and aspartate 50 contribute to the NADP(+) site; that span reads GFGTY. Tyrosine 55 functions as the Proton donor in the catalytic mechanism. Histidine 117 is a binding site for substrate. NADP(+)-binding positions include 166–167, glutamine 190, 216–221, and 270–280; these read SN, YGALGT, and KSFNEERIREN.

This sequence belongs to the aldo/keto reductase family. In terms of assembly, monomer. In terms of processing, the N-terminus is blocked. Corpus luteum (large luteal cells).

The protein localises to the cytoplasm. The enzyme catalyses (17R,20S)-17,20-dihydroxypregn-4-en-3-one + NADP(+) = 17alpha-hydroxyprogesterone + NADPH + H(+). It carries out the reaction (17R,20S)-17,20-dihydroxypregn-4-en-3-one + NAD(+) = 17alpha-hydroxyprogesterone + NADH + H(+). Catalyzes the conversion of progesterone into 20-alpha-dihydroprogesterone (20 alpha-OHP). This Rattus norvegicus (Rat) protein is Aldo-keto reductase family 1 member C18 (Akr1c18).